A 246-amino-acid chain; its full sequence is Peroxisomal membrane protein 11A (246 aa).

Topologically, residues Met-1 to Arg-93 are cytoplasmic. A helical transmembrane segment spans residues Val-94–Val-114. At Asn-115–Asn-217 the chain is on the lumenal side. The chain crosses the membrane as a helical span at residues Leu-218–Tyr-238. The tract at residues Leu-218 to Tyr-238 is required for homodimerization, interaction with PEX11G, and peroxisomal localization. Topologically, residues Pro-239 to Arg-246 are cytoplasmic.

This sequence belongs to the peroxin-11 family. Homodimer. Heterodimer with PEX11G. Probably interacts with COPB2 and COPA. Interacts with PEX19. Interacts with FIS1. In terms of tissue distribution, strongly expressed in liver and at lower levels in heart, brain, kidney and testis.

The protein localises to the peroxisome membrane. In terms of biological role, may be involved in peroxisomal proliferation and may regulate peroxisomes division. May mediate binding of coatomer proteins to the peroxisomal membrane. Promotes membrane protrusion and elongation on the peroxisomal surface. This chain is Peroxisomal membrane protein 11A (Pex11a), found in Mus musculus (Mouse).